A 548-amino-acid polypeptide reads, in one-letter code: Dihydroxy-acid dehydratase (548 aa).

Position 78 (aspartate 78) interacts with Mg(2+). Residue cysteine 119 coordinates [2Fe-2S] cluster. 2 residues coordinate Mg(2+): aspartate 120 and lysine 121. The residue at position 121 (lysine 121) is an N6-carboxylysine. Residue cysteine 185 coordinates [2Fe-2S] cluster. Mg(2+) is bound at residue glutamate 438. The active-site Proton acceptor is the serine 464.

The protein belongs to the IlvD/Edd family. As to quaternary structure, homodimer. [2Fe-2S] cluster is required as a cofactor. It depends on Mg(2+) as a cofactor.

The enzyme catalyses (2R)-2,3-dihydroxy-3-methylbutanoate = 3-methyl-2-oxobutanoate + H2O. The catalysed reaction is (2R,3R)-2,3-dihydroxy-3-methylpentanoate = (S)-3-methyl-2-oxopentanoate + H2O. The protein operates within amino-acid biosynthesis; L-isoleucine biosynthesis; L-isoleucine from 2-oxobutanoate: step 3/4. Its pathway is amino-acid biosynthesis; L-valine biosynthesis; L-valine from pyruvate: step 3/4. Functionally, functions in the biosynthesis of branched-chain amino acids. Catalyzes the dehydration of (2R,3R)-2,3-dihydroxy-3-methylpentanoate (2,3-dihydroxy-3-methylvalerate) into 2-oxo-3-methylpentanoate (2-oxo-3-methylvalerate) and of (2R)-2,3-dihydroxy-3-methylbutanoate (2,3-dihydroxyisovalerate) into 2-oxo-3-methylbutanoate (2-oxoisovalerate), the penultimate precursor to L-isoleucine and L-valine, respectively. The sequence is that of Dihydroxy-acid dehydratase from Methanothrix thermoacetophila (strain DSM 6194 / JCM 14653 / NBRC 101360 / PT) (Methanosaeta thermophila).